Consider the following 459-residue polypeptide: Argininosuccinate lyase (459 aa).

It belongs to the lyase 1 family. Argininosuccinate lyase subfamily.

The protein localises to the cytoplasm. The enzyme catalyses 2-(N(omega)-L-arginino)succinate = fumarate + L-arginine. Its pathway is amino-acid biosynthesis; L-arginine biosynthesis; L-arginine from L-ornithine and carbamoyl phosphate: step 3/3. The polypeptide is Argininosuccinate lyase (Oceanobacillus iheyensis (strain DSM 14371 / CIP 107618 / JCM 11309 / KCTC 3954 / HTE831)).